Consider the following 145-residue polypeptide: Ventricular natriuretic peptide (145 aa).

The first 24 residues, methionine 1 to alanine 24, serve as a signal peptide directing secretion. Cysteine 117 and cysteine 133 form a disulfide bridge.

The protein belongs to the natriuretic peptide family. Heart atrium and ventricle, and to a very low extent in brain.

Its subcellular location is the secreted. Functionally, exhibits natriuretic and vasodepressor activity. In Acipenser transmontanus (White sturgeon), this protein is Ventricular natriuretic peptide (vnp).